Reading from the N-terminus, the 242-residue chain is Ribonuclease 3 (242 aa).

The region spanning 10–146 is the RNase III domain; sequence LQNFNKKFAD…FVGALYLDQG (137 aa). Glutamate 59 serves as a coordination point for Mg(2+). The active site involves aspartate 63. Residues aspartate 132 and glutamate 135 each contribute to the Mg(2+) site. The active site involves glutamate 135. Positions 172–241 constitute a DRBM domain; that stretch reads DFKTQFQELI…AEKAYNDMKK (70 aa). Residues 216 to 242 are disordered; it reads VAKGQGRTKKESEQKAAEKAYNDMKKK. Residues 223-242 are compositionally biased toward basic and acidic residues; it reads TKKESEQKAAEKAYNDMKKK.

Belongs to the ribonuclease III family. Homodimer. Mg(2+) serves as cofactor.

It localises to the cytoplasm. It catalyses the reaction Endonucleolytic cleavage to 5'-phosphomonoester.. Functionally, digests double-stranded RNA. Involved in the processing of primary rRNA transcript to yield the immediate precursors to the large and small rRNAs (23S and 16S). Processes some mRNAs, and tRNAs when they are encoded in the rRNA operon. Processes pre-crRNA and tracrRNA of type II CRISPR loci if present in the organism. The polypeptide is Ribonuclease 3 (Staphylococcus carnosus (strain TM300)).